We begin with the raw amino-acid sequence, 265 residues long: MERRKVTIRYFLESKGKRRIAMITAYDYPTARLVDEAGVDGILVGDSLGMVVLGYESTIPVTLTDMLIHVAAVARAKPKALLVADMPFMTYETGPRDALKNASKLIRAGAEAVKPEGGLEIVRIVERLTKAGIPVMGHIGLNPQRVLTLGGFRMMGRTEEQRRKILEDAKALEEAGAFALVIEFVPAGLAREVTESVKIPTICIGAGPYCDGQILVLHDVIGLSEKPPSFAKRYADVASIIRNAVSNYVNEVKESKFPSPEYYKE.

Mg(2+) is bound by residues Asp-46 and Asp-85. 3-methyl-2-oxobutanoate is bound by residues Asp-46–Ser-47, Asp-85, and Lys-114. Glu-116 contributes to the Mg(2+) binding site. The Proton acceptor role is filled by Glu-183.

Belongs to the PanB family. As to quaternary structure, homodecamer; pentamer of dimers. It depends on Mg(2+) as a cofactor.

The protein localises to the cytoplasm. It carries out the reaction 3-methyl-2-oxobutanoate + (6R)-5,10-methylene-5,6,7,8-tetrahydrofolate + H2O = 2-dehydropantoate + (6S)-5,6,7,8-tetrahydrofolate. It functions in the pathway cofactor biosynthesis; coenzyme A biosynthesis. Its function is as follows. Catalyzes the reversible reaction in which hydroxymethyl group from 5,10-methylenetetrahydrofolate is transferred onto alpha-ketoisovalerate to form ketopantoate. The sequence is that of 3-methyl-2-oxobutanoate hydroxymethyltransferase from Caldivirga maquilingensis (strain ATCC 700844 / DSM 13496 / JCM 10307 / IC-167).